The chain runs to 194 residues: Lachesicidin (194 aa).

The signal sequence occupies residues 1-22 (MQGFFWKTWLVLAVCGTPASLA). Residues 23-160 (HRPLSYGEAL…DEEKDQPKRV (138 aa)) constitute a propeptide that is removed on maturation. Intrachain disulfides connect cysteine 79–cysteine 90 and cysteine 101–cysteine 118. Residues 125–154 (EEEEEEEEEEQKAEAENDEEVEKEKEDEEK) show a composition bias toward acidic residues. The disordered stretch occupies residues 125-157 (EEEEEEEEEEQKAEAENDEEVEKEKEDEEKDQP).

It belongs to the cathelicidin family. Expressed by the venom gland.

Its subcellular location is the secreted. The protein localises to the target cell membrane. Its function is as follows. Potent antimicrobial peptide against Gram-negative and Gram-positive bacteria. Adopts an amphipathic alpha helical conformation, that may allow to partition into the target membrane. Low hemolytic activities have been observed on mammalian cells. This is Lachesicidin from Lachesis muta rhombeata (Bushmaster).